Consider the following 101-residue polypeptide: NAD(P)H-quinone oxidoreductase subunit 4L, chloroplastic (101 aa).

Transmembrane regions (helical) follow at residues 2 to 22 (MLEHVLVLSAYLFSVGLYGLI), 32 to 52 (MCLELILNAVNINFVTFSDFF), and 61 to 81 (IFSIFVIAIAAAEAAIGLAIV).

The protein belongs to the complex I subunit 4L family. As to quaternary structure, NDH is composed of at least 16 different subunits, 5 of which are encoded in the nucleus.

It localises to the plastid. It is found in the chloroplast thylakoid membrane. The catalysed reaction is a plastoquinone + NADH + (n+1) H(+)(in) = a plastoquinol + NAD(+) + n H(+)(out). It carries out the reaction a plastoquinone + NADPH + (n+1) H(+)(in) = a plastoquinol + NADP(+) + n H(+)(out). Functionally, NDH shuttles electrons from NAD(P)H:plastoquinone, via FMN and iron-sulfur (Fe-S) centers, to quinones in the photosynthetic chain and possibly in a chloroplast respiratory chain. The immediate electron acceptor for the enzyme in this species is believed to be plastoquinone. Couples the redox reaction to proton translocation, and thus conserves the redox energy in a proton gradient. The chain is NAD(P)H-quinone oxidoreductase subunit 4L, chloroplastic from Panax ginseng (Korean ginseng).